The primary structure comprises 415 residues: Serine hydroxymethyltransferase 1 (415 aa).

(6S)-5,6,7,8-tetrahydrofolate is bound by residues leucine 122 and 126-128 (GHL). The residue at position 230 (lysine 230) is an N6-(pyridoxal phosphate)lysine.

This sequence belongs to the SHMT family. Homodimer. Pyridoxal 5'-phosphate serves as cofactor.

The protein resides in the cytoplasm. It carries out the reaction (6R)-5,10-methylene-5,6,7,8-tetrahydrofolate + glycine + H2O = (6S)-5,6,7,8-tetrahydrofolate + L-serine. It functions in the pathway one-carbon metabolism; tetrahydrofolate interconversion. Its pathway is amino-acid biosynthesis; glycine biosynthesis; glycine from L-serine: step 1/1. In terms of biological role, catalyzes the reversible interconversion of serine and glycine with tetrahydrofolate (THF) serving as the one-carbon carrier. This reaction serves as the major source of one-carbon groups required for the biosynthesis of purines, thymidylate, methionine, and other important biomolecules. Also exhibits THF-independent aldolase activity toward beta-hydroxyamino acids, producing glycine and aldehydes, via a retro-aldol mechanism. The protein is Serine hydroxymethyltransferase 1 of Ralstonia nicotianae (strain ATCC BAA-1114 / GMI1000) (Ralstonia solanacearum).